Reading from the N-terminus, the 407-residue chain is Arrestin homolog (407 aa).

The protein belongs to the arrestin family.

The polypeptide is Arrestin homolog (Locusta migratoria (Migratory locust)).